A 259-amino-acid polypeptide reads, in one-letter code: Potassium/proton antiporter CemA (259 aa).

A run of 4 helical transmembrane segments spans residues 47-67 (CLLVLPWVISILLQKSIEPWV), 136-156 (IITHLFTNFIGFALLSTYLVM), 184-204 (ILLATDLCIGFHSPHGWELLI), and 219-239 (IISSLVSTFPVILDTIFKYWI).

Belongs to the CemA family.

It is found in the plastid. The protein localises to the chloroplast inner membrane. The catalysed reaction is K(+)(in) + H(+)(out) = K(+)(out) + H(+)(in). Its function is as follows. Contributes to K(+)/H(+) antiport activity by supporting proton efflux to control proton extrusion and homeostasis in chloroplasts in a light-dependent manner to modulate photosynthesis. Prevents excessive induction of non-photochemical quenching (NPQ) under continuous-light conditions. Indirectly promotes efficient inorganic carbon uptake into chloroplasts. This Welwitschia mirabilis (Tree tumbo) protein is Potassium/proton antiporter CemA.